The primary structure comprises 890 residues: Alanine--tRNA ligase (890 aa).

Zn(2+)-binding residues include His567, His571, Cys680, and His684.

Belongs to the class-II aminoacyl-tRNA synthetase family. It depends on Zn(2+) as a cofactor.

Its subcellular location is the cytoplasm. The enzyme catalyses tRNA(Ala) + L-alanine + ATP = L-alanyl-tRNA(Ala) + AMP + diphosphate. In terms of biological role, catalyzes the attachment of alanine to tRNA(Ala) in a two-step reaction: alanine is first activated by ATP to form Ala-AMP and then transferred to the acceptor end of tRNA(Ala). Also edits incorrectly charged Ser-tRNA(Ala) and Gly-tRNA(Ala) via its editing domain. The polypeptide is Alanine--tRNA ligase (Ruegeria pomeroyi (strain ATCC 700808 / DSM 15171 / DSS-3) (Silicibacter pomeroyi)).